The primary structure comprises 1300 residues: Nephrocystin-3 (1300 aa).

Positions 82–183 (KNNEVASMQK…LQRLQAQGIQ (102 aa)) form a coiled coil. TPR repeat units lie at residues 443–476 (TMED…ICEL), 916–949 (ADLY…RETA), 958–991 (AQSL…SENA), 1000–1033 (AREL…RQKS), 1066–1099 (ARTL…RERV), 1108–1141 (AQSI…RRRA), 1150–1183 (AYTV…RQKS), 1192–1225 (ATAL…YEDS), and 1234–1267 (GETL…KETE). A disordered region spans residues 1268–1288 (TSVLGAKAPSGHSSSGGDTYS). Polar residues predominate over residues 1278–1288 (GHSSSGGDTYS).

The protein localises to the cell projection. It is found in the cilium. Functionally, required for normal ciliary development and function. Inhibits disheveled-1-induced canonical Wnt-signaling activity and may also play a role in the control of non-canonical Wnt signaling that regulates planar cell polarity. Probably acts as a molecular switch between different Wnt signaling pathways. Required for proper convergent extension cell movements. This is Nephrocystin-3 (nphp3) from Xenopus laevis (African clawed frog).